A 544-amino-acid polypeptide reads, in one-letter code: Chaperonin GroEL (544 aa).

Residues 30–33, Lys51, 87–91, Gly415, 478–480, and Asp494 each bind ATP; these read TLGP, DGTTT, and DVA. Positions 524–544 are disordered; it reads PEKEKKPATPAGAGGMGDMEY. Gly residues predominate over residues 535–544; sequence GAGGMGDMEY.

Belongs to the chaperonin (HSP60) family. As to quaternary structure, forms a cylinder of 14 subunits composed of two heptameric rings stacked back-to-back. Interacts with the co-chaperonin GroES.

Its subcellular location is the cytoplasm. It catalyses the reaction ATP + H2O + a folded polypeptide = ADP + phosphate + an unfolded polypeptide.. In terms of biological role, together with its co-chaperonin GroES, plays an essential role in assisting protein folding. The GroEL-GroES system forms a nano-cage that allows encapsulation of the non-native substrate proteins and provides a physical environment optimized to promote and accelerate protein folding. This chain is Chaperonin GroEL, found in Methylacidiphilum infernorum (isolate V4) (Methylokorus infernorum (strain V4)).